Reading from the N-terminus, the 262-residue chain is Hemin import ATP-binding protein HmuV (262 aa).

The ABC transporter domain maps to 5–242 (LEARKAGFAT…ELIGAVFDVE (238 aa)). 37-44 (GPNGAGKS) is an ATP binding site.

It belongs to the ABC transporter superfamily. Heme (hemin) importer (TC 3.A.1.14.5) family. As to quaternary structure, the complex is composed of two ATP-binding proteins (HmuV), two transmembrane proteins (HmuU) and a solute-binding protein (HmuT).

The protein resides in the cell inner membrane. Functionally, part of the ABC transporter complex HmuTUV involved in hemin import. Responsible for energy coupling to the transport system. This Rhodopseudomonas palustris (strain HaA2) protein is Hemin import ATP-binding protein HmuV.